We begin with the raw amino-acid sequence, 346 residues long: Selenoprotein V (346 aa).

2 disordered regions span residues 1–40 (MNNQARTPAPSSARTSTSVRASTPTRTPTPLRTPTPVRTR) and 151–206 (LDPP…PGPT). Residues 151–162 (LDPPPEPAPELP) are compositionally biased toward pro residues. The segment at residues 270-273 (CGLU) is a cross-link (cysteinyl-selenocysteine (Cys-Sec); redox-active). Position 273 (U273) is a non-standard amino acid, selenocysteine.

Belongs to the SelWTH family. Post-translationally, truncated SELENOV proteins produced by failed UGA/Sec decoding are ubiquitinated by the CRL2(APPBP2) complex, which recognizes the glycine (Gly) at the C-terminus of truncated SELENOV proteins. As to expression, testis specific.

In terms of biological role, may be involved in a redox-related process. In Homo sapiens (Human), this protein is Selenoprotein V.